Consider the following 833-residue polypeptide: Leucine--tRNA ligase (833 aa).

Positions 41-52 match the 'HIGH' region motif; the sequence is PYPSGAGLHVGH. The 'KMSKS' region motif lies at 610 to 614; that stretch reads KMSKS. Residue Lys613 participates in ATP binding.

Belongs to the class-I aminoacyl-tRNA synthetase family.

The protein localises to the cytoplasm. It carries out the reaction tRNA(Leu) + L-leucine + ATP = L-leucyl-tRNA(Leu) + AMP + diphosphate. The polypeptide is Leucine--tRNA ligase (Streptococcus pneumoniae serotype 19F (strain G54)).